The primary structure comprises 1006 residues: Collagen alpha-2(I) chain (1006 aa).

The segment at 1–84 is disordered; it reads SGGFDFSFLP…GFPGTPGLPG (84 aa). 4-hydroxyproline is present on residues Pro-10, Pro-13, Pro-35, and Pro-41. The segment covering 28-64 has biased composition (low complexity); the sequence is LMGPRGPPGASGAPGPQGFQGPAGEPGEPGQTGPAGA. 5-hydroxylysine; alternate is present on Lys-86. A glycan (O-linked (Gal...) hydroxylysine; alternate) is linked at Lys-86. The disordered stretch occupies residues 99 to 1006; that stretch reads GQPGAAGVKG…FGYEGDFYRA (908 aa). 2 stretches are compositionally biased toward low complexity: residues 142-163 and 209-230; these read SRGS…SAGP and PGAN…AGAP. Gly residues predominate over residues 264-273; sequence GESGGKGEPG. Residues 274 to 284 show a composition bias toward low complexity; the sequence is SAGPQGPPGSS. The span at 306 to 315 shows a compositional bias: gly residues; that stretch reads GLRGGPGSRG. Positions 328-344 are enriched in low complexity; it reads PAGARGASGPAGVRGPS. 4-hydroxyproline is present on residues Pro-350 and Pro-353. Low complexity predominate over residues 379–398; it reads LPGIDGRPGPIGPAGARGEA. Residues 447–456 show a composition bias toward gly residues; that stretch reads GVQGGKGEQG. 2 stretches are compositionally biased toward low complexity: residues 503-520 and 532-542; these read PGES…SRGP and EPGVVGAPGTA. Gly residues predominate over residues 543–552; it reads GPAGSGGLPG. 2 stretches are compositionally biased toward low complexity: residues 585–615 and 622–642; these read AVGA…PRGS and VGPA…QPGA. Basic and acidic residues predominate over residues 643-652; it reads KGERGTKGPK. The span at 660–670 shows a compositional bias: low complexity; the sequence is PTGPVGSAGPA. Residues 680 to 689 are compositionally biased toward gly residues; sequence GSRGDGGPPG. A compositionally biased stretch (low complexity) spans 691–700; sequence TGFPGAAGRT. Positions 737 to 746 are enriched in gly residues; that stretch reads GETGAGGPPG. Composition is skewed to low complexity over residues 754 to 781 and 789 to 799; these read SGEP…LGLP and LPGVAGAVGEP. Positions 800–810 are enriched in gly residues; it reads GPLGIGPPGAR. A compositionally biased stretch (low complexity) spans 837–882; it reads YAGNPGPVGAAGAPGPHGAVGPAGKHGNRGEPGPVGSAGPVGALGP. A compositionally biased stretch (basic and acidic residues) spans 892–903; it reads RGDKGEAGDKGP. Positions 976–988 are enriched in pro residues; it reads SGPPGPPGPPGPP.

It belongs to the fibrillar collagen family. Trimers of one alpha 2(I) and two alpha 1(I) chains. Interacts (via C-terminus) with TMEM131 (via PapD-L domain); the interaction is direct and is involved in assembly and TRAPPIII ER-to-Golgi transport complex-dependent secretion of collagen. Post-translationally, prolines at the third position of the tripeptide repeating unit (G-X-Y) are hydroxylated in some or all of the chains. Expressed in bones.

Its subcellular location is the secreted. The protein resides in the extracellular space. It localises to the extracellular matrix. In terms of biological role, type I collagen is a member of group I collagen (fibrillar forming collagen). The polypeptide is Collagen alpha-2(I) chain (Choloepus hoffmanni (Hoffmann's two-fingered sloth)).